A 241-amino-acid polypeptide reads, in one-letter code: Biosynthetic peptidoglycan transglycosylase (241 aa).

Residues Gly18 to Val38 traverse the membrane as a helical segment.

This sequence belongs to the glycosyltransferase 51 family.

It localises to the cell inner membrane. It carries out the reaction [GlcNAc-(1-&gt;4)-Mur2Ac(oyl-L-Ala-gamma-D-Glu-L-Lys-D-Ala-D-Ala)](n)-di-trans,octa-cis-undecaprenyl diphosphate + beta-D-GlcNAc-(1-&gt;4)-Mur2Ac(oyl-L-Ala-gamma-D-Glu-L-Lys-D-Ala-D-Ala)-di-trans,octa-cis-undecaprenyl diphosphate = [GlcNAc-(1-&gt;4)-Mur2Ac(oyl-L-Ala-gamma-D-Glu-L-Lys-D-Ala-D-Ala)](n+1)-di-trans,octa-cis-undecaprenyl diphosphate + di-trans,octa-cis-undecaprenyl diphosphate + H(+). The protein operates within cell wall biogenesis; peptidoglycan biosynthesis. In terms of biological role, peptidoglycan polymerase that catalyzes glycan chain elongation from lipid-linked precursors. The sequence is that of Biosynthetic peptidoglycan transglycosylase from Yersinia pestis bv. Antiqua (strain Antiqua).